A 304-amino-acid chain; its full sequence is Recombination-associated protein RdgC (304 aa).

This sequence belongs to the RdgC family.

It is found in the cytoplasm. Its subcellular location is the nucleoid. May be involved in recombination. In Shewanella sp. (strain ANA-3), this protein is Recombination-associated protein RdgC.